We begin with the raw amino-acid sequence, 179 residues long: Large ribosomal subunit protein uL5 (179 aa).

Belongs to the universal ribosomal protein uL5 family. Part of the 50S ribosomal subunit; part of the 5S rRNA/L5/L18/L25 subcomplex. Contacts the 5S rRNA and the P site tRNA. Forms a bridge to the 30S subunit in the 70S ribosome.

This is one of the proteins that bind and probably mediate the attachment of the 5S RNA into the large ribosomal subunit, where it forms part of the central protuberance. In the 70S ribosome it contacts protein S13 of the 30S subunit (bridge B1b), connecting the 2 subunits; this bridge is implicated in subunit movement. Contacts the P site tRNA; the 5S rRNA and some of its associated proteins might help stabilize positioning of ribosome-bound tRNAs. This Anoxybacillus flavithermus (strain DSM 21510 / WK1) protein is Large ribosomal subunit protein uL5.